We begin with the raw amino-acid sequence, 108 residues long: Protein translation factor SUI1 (108 aa).

A disordered region spans residues 1–20 (MSIENLKSFDPFADTGDDEA).

It belongs to the SUI1 family.

Its function is as follows. Additional factor that functions in concert with eIF-2 and the initiator tRNA in directing the ribosome to the proper start site of translation. The sequence is that of Protein translation factor SUI1 (SUI1A) from Eremothecium gossypii (strain ATCC 10895 / CBS 109.51 / FGSC 9923 / NRRL Y-1056) (Yeast).